The sequence spans 185 residues: Meiotic expression up-regulated protein 31 (185 aa).

This chain is Meiotic expression up-regulated protein 31 (meu31), found in Schizosaccharomyces pombe (strain 972 / ATCC 24843) (Fission yeast).